The sequence spans 581 residues: Ketol-acid reductoisomerase, chloroplastic (581 aa).

The N-terminal 50 residues, 1–50 (MAAVTSSCSTAISASSKTLAKPVAASFAPTNLSFSKLSPQSIRARRSITV), are a transit peptide targeting the chloroplast. In terms of domain architecture, KARI N-terminal Rossmann spans 92 to 290 (VRGGRDLFHL…ALGSPFTFAT (199 aa)). Residues 113–120 (GVIGWGSQ), 146–151 (RKGSSS), and 185–189 (SDSAQ) each bind NADP(+). H210 is a catalytic residue. KARI C-terminal knotted domains are found at residues 291–439 (TLEQ…RPAG) and 440–576 (DLGP…RPEL). D299, E303, E476, and E480 together coordinate Mg(2+). S502 serves as a coordination point for substrate.

The protein belongs to the ketol-acid reductoisomerase family. In terms of assembly, homodimer. It depends on Mg(2+) as a cofactor.

It is found in the plastid. The protein resides in the chloroplast. The catalysed reaction is (2R)-2,3-dihydroxy-3-methylbutanoate + NADP(+) = (2S)-2-acetolactate + NADPH + H(+). It catalyses the reaction (2R,3R)-2,3-dihydroxy-3-methylpentanoate + NADP(+) = (S)-2-ethyl-2-hydroxy-3-oxobutanoate + NADPH + H(+). Its pathway is amino-acid biosynthesis; L-isoleucine biosynthesis; L-isoleucine from 2-oxobutanoate: step 2/4. It participates in amino-acid biosynthesis; L-valine biosynthesis; L-valine from pyruvate: step 2/4. This Pisum sativum (Garden pea) protein is Ketol-acid reductoisomerase, chloroplastic (PGAAIR).